Consider the following 142-residue polypeptide: Putative pre-16S rRNA nuclease (142 aa).

It belongs to the YqgF nuclease family.

It localises to the cytoplasm. Its function is as follows. Could be a nuclease involved in processing of the 5'-end of pre-16S rRNA. This Nitratidesulfovibrio vulgaris (strain DP4) (Desulfovibrio vulgaris) protein is Putative pre-16S rRNA nuclease.